The primary structure comprises 220 residues: Ribosomal RNA large subunit methyltransferase E (220 aa).

Residues Gly-60, Trp-62, Asp-92, Asp-108, and Asp-133 each coordinate S-adenosyl-L-methionine. Lys-173 acts as the Proton acceptor in catalysis.

The protein belongs to the class I-like SAM-binding methyltransferase superfamily. RNA methyltransferase RlmE family.

Its subcellular location is the cytoplasm. The enzyme catalyses uridine(2552) in 23S rRNA + S-adenosyl-L-methionine = 2'-O-methyluridine(2552) in 23S rRNA + S-adenosyl-L-homocysteine + H(+). In terms of biological role, specifically methylates the uridine in position 2552 of 23S rRNA at the 2'-O position of the ribose in the fully assembled 50S ribosomal subunit. This is Ribosomal RNA large subunit methyltransferase E from Burkholderia multivorans (strain ATCC 17616 / 249).